Here is a 283-residue protein sequence, read N- to C-terminus: Phosphatidylglycerol--prolipoprotein diacylglyceryl transferase (283 aa).

A run of 7 helical transmembrane segments spans residues 18–38, 59–79, 91–111, 124–144, 185–205, 213–233, and 251–271; these read LFGHPIVWYGLLFALGLIILG, LAVYVFVGTIVGARLGHVLFY, IFVTWEGGLASHGGTIGIIIA, ILWVLDRLAVPTGIVAAMIRL, TQIYEALCYLAVFALCMWLYW, YSGLIVGVFLTGIFLSRFIIE, and GLNMGQLLSIPFVLAGIWLII. Position 143 (Arg-143) interacts with a 1,2-diacyl-sn-glycero-3-phospho-(1'-sn-glycerol).

It belongs to the Lgt family.

The protein resides in the cell inner membrane. The catalysed reaction is L-cysteinyl-[prolipoprotein] + a 1,2-diacyl-sn-glycero-3-phospho-(1'-sn-glycerol) = an S-1,2-diacyl-sn-glyceryl-L-cysteinyl-[prolipoprotein] + sn-glycerol 1-phosphate + H(+). It participates in protein modification; lipoprotein biosynthesis (diacylglyceryl transfer). Functionally, catalyzes the transfer of the diacylglyceryl group from phosphatidylglycerol to the sulfhydryl group of the N-terminal cysteine of a prolipoprotein, the first step in the formation of mature lipoproteins. In Porphyromonas gingivalis (strain ATCC 33277 / DSM 20709 / CIP 103683 / JCM 12257 / NCTC 11834 / 2561), this protein is Phosphatidylglycerol--prolipoprotein diacylglyceryl transferase.